The primary structure comprises 350 residues: Inner membrane protein YhiM (350 aa).

Residues 1–2 (MN) lie on the Cytoplasmic side of the membrane. The helical transmembrane segment at 3-23 (IYIGWLFKLIPLIMGLICIAL) threads the bilayer. Residues 24-41 (GGFVLESSGQSEYFVAGH) are Periplasmic-facing. The helical transmembrane segment at 42–62 (VLISLAAICLALFTTAFIIIS) threads the bilayer. The Cytoplasmic segment spans residues 63 to 74 (QLTRGVNTFYNT). A helical membrane pass occupies residues 75–95 (LFPIIGYAGSIITMIWGWALL). Residues 96–104 (AGNDVMADE) lie on the Periplasmic side of the membrane. The helical transmembrane segment at 105–125 (FVAGHVIFGVGMIAACVSTVA) threads the bilayer. Residues 126 to 157 (ASSGHFLLIPKNAAGSKSDGTPVQAYSSLIGN) are Cytoplasmic-facing. Residues 158 to 178 (CLIAVPVLLTLLGFIWSITLL) form a helical membrane-spanning segment. The Periplasmic portion of the chain corresponds to 179–190 (RSADITPHYVAG). The helical transmembrane segment at 191-211 (HVLLGLTAICACLIGLVATIV) threads the bilayer. Topologically, residues 212–225 (HQTRNTFSTKEHWL) are cytoplasmic. The chain crosses the membrane as a helical span at residues 226–246 (WCYWVIFLGSITVLQGIYVLV). Residues 247 to 257 (SSDASARLAPG) lie on the Periplasmic side of the membrane. A helical membrane pass occupies residues 258–278 (IILICLGMICYSIFSKVWLLA). Residues 279–290 (LVWRRTCSLANR) lie on the Cytoplasmic side of the membrane. The chain crosses the membrane as a helical span at residues 291 to 311 (IPMIPVFTCLFCLFLASFLAE). Residues 312 to 324 (MAQTDMGYFIPSR) are Periplasmic-facing. A helical membrane pass occupies residues 325–345 (VLVGLGAVCFTLFSIVSILEA). Residues 346–350 (GSAKK) are Cytoplasmic-facing.

It localises to the cell inner membrane. This is Inner membrane protein YhiM (yhiM) from Escherichia coli (strain K12).